The following is a 269-amino-acid chain: AA9 family lytic polysaccharide monooxygenase I (269 aa).

Positions 1–17 (MFSKKITALALVSAVKA) are cleaved as a signal peptide. Positions 18 and 103 each coordinate Cu(2+). A disulfide bridge links cysteine 73 with cysteine 196. N-linked (GlcNAc...) asparagine glycosylation occurs at asparagine 156. 2 residues coordinate O2: histidine 182 and glutamine 191. Position 193 (tyrosine 193) interacts with Cu(2+).

It belongs to the polysaccharide monooxygenase AA9 family. Cu(2+) serves as cofactor.

It localises to the secreted. The enzyme catalyses [(1-&gt;4)-beta-D-glucosyl]n+m + reduced acceptor + O2 = 4-dehydro-beta-D-glucosyl-[(1-&gt;4)-beta-D-glucosyl]n-1 + [(1-&gt;4)-beta-D-glucosyl]m + acceptor + H2O.. In terms of biological role, lytic polysaccharide monooxygenase (LPMO) that depolymerizes crystalline and amorphous polysaccharides via the oxidation of scissile alpha- or beta-(1-4)-glycosidic bonds, yielding C1 and C4 oxidation products. Catalysis by LPMOs requires the reduction of the active-site copper from Cu(II) to Cu(I) by a reducing agent and H(2)O(2) or O(2) as a cosubstrate. The protein is AA9 family lytic polysaccharide monooxygenase I of Botryotinia fuckeliana (strain B05.10) (Noble rot fungus).